Reading from the N-terminus, the 211-residue chain is Thymidylate kinase (211 aa).

ATP is bound at residue 10–17; it reads GPDGAGKT.

This sequence belongs to the thymidylate kinase family.

The catalysed reaction is dTMP + ATP = dTDP + ADP. Functionally, phosphorylation of dTMP to form dTDP in both de novo and salvage pathways of dTTP synthesis. The chain is Thymidylate kinase from Lactococcus lactis subsp. cremoris (strain SK11).